The following is a 209-amino-acid chain: MKAVVQRVTRASVTVGGEQISAIGRGICVLLGISMEDSQKELEHMVRKILNLRVFEDESGKHWSKSVMDKEYEVLCVSQFTLQCVLKGNKPDFHLAMPTEQAESFYNSFLEQLRKSYRPELIRDGKFGAYMQVHIQNDGPVTIELESPAPGAASSDPKQLSKLEKQQQRKEKTRAKGPSESSKERNAPRKEDRSASSGAEGDVSSEREP.

The short motif at 139-140 (GP) is the Gly-cisPro motif, important for rejection of L-amino acids element. The tract at residues 142-209 (TIELESPAPG…EGDVSSEREP (68 aa)) is disordered. Composition is skewed to basic and acidic residues over residues 159 to 170 (QLSKLEKQQQRK) and 181 to 194 (SSKE…EDRS). 3 positions are modified to phosphoserine: serine 197, serine 204, and serine 205.

The protein belongs to the DTD family. As to quaternary structure, homodimer. Interacts with CDC45 and TOPBP1. Preferentially phosphorylated in cells arrested early in S phase. Phosphorylation in the C-terminus weakens the interaction with CDC45.

The protein resides in the nucleus. It localises to the cytoplasm. It carries out the reaction glycyl-tRNA(Ala) + H2O = tRNA(Ala) + glycine + H(+). The catalysed reaction is a D-aminoacyl-tRNA + H2O = a tRNA + a D-alpha-amino acid + H(+). An aminoacyl-tRNA editing enzyme that deacylates mischarged D-aminoacyl-tRNAs. Also deacylates mischarged glycyl-tRNA(Ala), protecting cells against glycine mischarging by AlaRS. Acts via tRNA-based rather than protein-based catalysis; rejects L-amino acids rather than detecting D-amino acids in the active site. By recycling D-aminoacyl-tRNA to D-amino acids and free tRNA molecules, this enzyme counteracts the toxicity associated with the formation of D-aminoacyl-tRNA entities in vivo and helps enforce protein L-homochirality. In terms of biological role, ATPase involved in DNA replication, may facilitate loading of CDC45 onto pre-replication complexes. The sequence is that of D-aminoacyl-tRNA deacylase 1 (Dtd1) from Mus musculus (Mouse).